Here is an 898-residue protein sequence, read N- to C-terminus: MKEFYISIETVGNNIVERYIDENGKERTREVEYLPTMFRHCKEESKYKDIYGKNCAPQKFPSMKDARDWMKRMEDIGLEALGMNDFKLAYISDTYGSEIVYDRKFVRVANCDIEVTGDKFPDPMKAEYEIDAITHYDSIDDRFYVFDLLNSMYGSVSKWDAKLAAKLDCEGGDEVPQEILDRVIYMPFDNERDMLMEYINLWEQKRPAIFTGWNIEGFDVPYIMNRVKMILGERSMKRFSPIGRVKSKLIQNMYGSKEIYSIDGVSILDYLDLYKKFAFTNLPSFSLESVAQHETKKGKLPYDGPINKLRETNHQRYISYNIIDVESVQAIDKIRGFIDLVLSMSYYAKMPFSGVMSPIKTWDAIIFNSLKGEHKVIPQQGSHVKQSFPGAFVFEPKPIARRYIMSFDLTSLYPSIIRQVNISPETIRGQFKVHPIHEYIAGTAPKPSDEYSCSPNGWMYDKHQEGIIPKEIAKVFFQRKDWKKKMFAEEMNAEAIKKIIMKGAGSCSTKPEVERYVKFSDDFLNELSNYTESVLNSLIEECEKAATLANTNQLNRKILINSLYGALGNIHFRYYDLRNATAITIFGQVGIQWIARKINEYLNKVCGTNDEDFIAAGDTDSVYVCVDKVIEKVGLDRFKEQNDLVEFMNQFGKKKMEPMIDVAYRELCDYMNNREHLMHMDREAISCPPLGSKGVGGFWKAKKRYALNVYDMEDKRFAEPHLKIMGMETQQSSTPKAVQEALEESIRRILQEGEESVQEYYKNFEKEYRQLDYKVIAEVKTANDIAKYDDKGWPGFKCPFHIRGVLTYRRAVSGLGVAPILDGNKVMVLPLREGNPFGDKCIAWPSGTELPKEIRSDVLSWIDHSTLFQKSFVKPLAGMCESAGMDYEEKASLDFLFG.

Residues Tyr-101–Phe-337 form a 3'-5'exonuclease region. Positions 112, 114, and 219 each coordinate Mg(2+). The segment at Val-245 to Ser-261 is beta hairpin. Mg(2+)-binding residues include Asp-324, Asp-408, and Leu-409. The segment at Ile-377–Gly-898 is polymerase. Substrate-binding positions include Ser-411 to Tyr-413, Arg-479, and Lys-557. Residue Asp-620 participates in Mg(2+) binding. Residues Lys-702 to Tyr-705 are binding of DNA in B-conformation. Residues Leu-893–Gly-898 are interaction with the polymerase clamp.

It belongs to the DNA polymerase type-B family. In terms of assembly, interacts with the polymerase clamp; this interaction constitutes the polymerase holoenzyme. Interacts with the helicase assembly factor. Part of the replicase complex that includes the DNA polymerase, the polymerase clamp, the clamp loader complex, the single-stranded DNA binding protein, the primase, the helicase and the helicase assembly factor. Mg(2+) is required as a cofactor.

The catalysed reaction is DNA(n) + a 2'-deoxyribonucleoside 5'-triphosphate = DNA(n+1) + diphosphate. Its function is as follows. Replicates the viral genomic DNA. This polymerase possesses two enzymatic activities: DNA synthesis (polymerase) and an exonucleolytic activity that degrades single-stranded DNA in the 3'- to 5'-direction for proofreading purpose. The protein is DNA-directed DNA polymerase (43) of Enterobacteria phage T4 (Bacteriophage T4).